A 120-amino-acid chain; its full sequence is MFLLHEYDIFWAFLIISSVIPILAFLISGVLAPISKGPEKLSSYESGIEPMGDAWLQFRIRYYMFALVFVVFDVETVFLYPWAMSFDVLGVSVFIEALIFVLILIVGSVYAWRKGALEWS.

The next 3 helical transmembrane spans lie at 9–29, 64–84, and 88–108; these read IFWA…LISG, MFAL…PWAM, and VLGV…IVGS.

Belongs to the complex I subunit 3 family. In terms of assembly, NDH is composed of at least 16 different subunits, 5 of which are encoded in the nucleus.

The protein localises to the plastid. The protein resides in the chloroplast thylakoid membrane. It catalyses the reaction a plastoquinone + NADH + (n+1) H(+)(in) = a plastoquinol + NAD(+) + n H(+)(out). The catalysed reaction is a plastoquinone + NADPH + (n+1) H(+)(in) = a plastoquinol + NADP(+) + n H(+)(out). In terms of biological role, NDH shuttles electrons from NAD(P)H:plastoquinone, via FMN and iron-sulfur (Fe-S) centers, to quinones in the photosynthetic chain and possibly in a chloroplast respiratory chain. The immediate electron acceptor for the enzyme in this species is believed to be plastoquinone. Couples the redox reaction to proton translocation, and thus conserves the redox energy in a proton gradient. The chain is NAD(P)H-quinone oxidoreductase subunit 3, chloroplastic from Buxus microphylla (Littleleaf boxwood).